The sequence spans 127 residues: Major sperm protein 78 (127 aa).

An N-acetylalanine modification is found at A2. The 118-residue stretch at 9–126 (DIQTQPGTKI…RRKNLPIEYN (118 aa)) folds into the MSP domain.

As to expression, sperm.

Its subcellular location is the cell projection. It localises to the pseudopodium. The protein resides in the cytoplasm. The protein localises to the cytoskeleton. Functionally, central component in molecular interactions underlying sperm crawling. Forms an extensive filament system that extends from sperm villipoda, along the leading edge of the pseudopod. This chain is Major sperm protein 78 (msp-78), found in Caenorhabditis elegans.